The sequence spans 315 residues: Eukaryotic translation initiation factor 2 subunit 1 (315 aa).

Positions 17–88 constitute an S1 motif domain; it reads DDVVMVNVRS…DKGYIDLSKR (72 aa). Phosphoserine occurs at positions 49 and 52. The interval 292-315 is disordered; sequence RLEKENAEVDGDDDAEEMEAKTED. Over residues 299-308 the composition is skewed to acidic residues; it reads EVDGDDDAEE.

The protein belongs to the eIF-2-alpha family. As to quaternary structure, eukaryotic translation initiation factor 2 eIF2 is a heterotrimeric complex composed of an alpha, a beta and a gamma subunit. Phosphorylation at Ser-49 and Ser-52 stabilizes the eIF-2/GDP/eIF2B complex and prevents GDP/GTP exchange reaction, thus impairing the recycling of eIF-2 between successive rounds of initiation and leading to global inhibition of translation, while concomitantly initiating the preferential translation of integrated stress response (ISR)-specific mRNAs.

The protein localises to the cytoplasm. The protein resides in the stress granule. It is found in the cytosol. Activity is regulated by phosphorylation at Ser-49 and Ser-52, which stabilizes the eIF-2/GDP/eIF2B complex and prevents the eIF2B-mediated exchange of GDP for GTP, thereby preventing the formation of the 43S pre-initiation complex (PIC). This results in the global attenuation of 5' cap-dependent protein synthesis and concomitant translation of ISR-specific mRNAs that contain a short upstream open reading frame (uORF) in their 5' UTR. Its function is as follows. Functions in the early steps of protein synthesis by forming a ternary complex with GTP and initiator tRNA. This complex binds to a 40S ribosomal subunit, followed by mRNA binding to form a 43S pre-initiation complex. Junction of the 60S ribosomal subunit to form the 80S initiation complex is preceded by hydrolysis of the GTP bound to eIF-2 and release of an eIF-2-GDP binary complex. In order for eIF-2 to recycle and catalyze another round of initiation, the GDP bound to eIF-2 must exchange with GTP by way of a reaction catalyzed by eIF2B. EIF2S1/eIF2-alpha is a key component of the integrated stress response (ISR), required for adaptation to various stress: phosphorylation by metabolic-stress sensing protein kinases in response to stress converts EIF2S1/eIF-2-alpha in a global protein synthesis inhibitor, leading to a attenuation of cap-dependent translation, while concomitantly initiating the preferential translation of ISR-specific mRNAs, such as the transcriptional activators ATF4 and QRICH1. In Xenopus tropicalis (Western clawed frog), this protein is Eukaryotic translation initiation factor 2 subunit 1 (eif2s1).